A 131-amino-acid polypeptide reads, in one-letter code: Large ribosomal subunit protein bL21 (131 aa).

The tract at residues 111-131 is disordered; it reads VAAATGTADARRAAHNASAKE.

It belongs to the bacterial ribosomal protein bL21 family. In terms of assembly, part of the 50S ribosomal subunit. Contacts protein L20.

Its function is as follows. This protein binds to 23S rRNA in the presence of protein L20. This chain is Large ribosomal subunit protein bL21, found in Cereibacter sphaeroides (strain ATCC 17029 / ATH 2.4.9) (Rhodobacter sphaeroides).